The sequence spans 199 residues: Small ribosomal subunit protein uS5 (199 aa).

The disordered stretch occupies residues 1–28 (MARTPNTDRRQRGGDDQRNRSPRSDERD). In terms of domain architecture, S5 DRBM spans 31 to 94 (FLDKLVHINR…DQAKRTMIKV (64 aa)).

The protein belongs to the universal ribosomal protein uS5 family. Part of the 30S ribosomal subunit. Contacts proteins S4 and S8.

Functionally, with S4 and S12 plays an important role in translational accuracy. Its function is as follows. Located at the back of the 30S subunit body where it stabilizes the conformation of the head with respect to the body. This Rhodospirillum rubrum (strain ATCC 11170 / ATH 1.1.1 / DSM 467 / LMG 4362 / NCIMB 8255 / S1) protein is Small ribosomal subunit protein uS5.